Reading from the N-terminus, the 938-residue chain is Ubiquitin carboxyl-terminal hydrolase Usp2 (938 aa).

6 disordered regions span residues 1–53 (MMLD…KVGA), 91–117 (KVKTTLQPHRRSRAGEDSRNNNYNTSR), 130–254 (FNGN…ISTT), 273–297 (EQNQVQQQEEQPQPSSSKSASHRYP), 360–410 (LSGQ…NLQQ), and 500–610 (KDAT…EKSE). The segment covering 22-36 (STTKTSSVVATSASS) has biased composition (low complexity). Low complexity-rich tracts occupy residues 137 to 158 (TTTNSTTINNTTSRNTTSNTSN), 167 to 177 (STTATATSTST), 198 to 227 (MNGHTNNNNNNTRNSSNINNGGNNNMQRQQ), and 275 to 289 (NQVQQQEEQPQPSSS). Over residues 392-410 (ASRSNHGSQAGGSSSNLQQ) the composition is skewed to polar residues. 2 stretches are compositionally biased toward low complexity: residues 502 to 555 (ATTA…TARS) and 574 to 583 (TSRSSIGTSS). Positions 592–610 (HNSDDGYKTASSSRDEKSE) are enriched in basic and acidic residues. One can recognise a USP domain in the interval 613–938 (CGLRNIGNTC…SAYILFYERT (326 aa)). Residue C622 is the Nucleophile of the active site. Residues C765, C768, C814, and C817 each contribute to the Zn(2+) site. H895 functions as the Proton acceptor in the catalytic mechanism.

It belongs to the peptidase C19 family. In terms of assembly, interacts (via N-terminus) with imd (via N-terminus). Interacts with Rpt6.

It carries out the reaction Thiol-dependent hydrolysis of ester, thioester, amide, peptide and isopeptide bonds formed by the C-terminal Gly of ubiquitin (a 76-residue protein attached to proteins as an intracellular targeting signal).. Its function is as follows. Hydrolase that deubiquitinates polyubiquitinated target proteins. Required for preventing the activation of the Toll signaling cascades under unchallenged conditions. Essential for bodily calcium homeostasis. Required for preventing the activation of the immune deficiency (Imd) signaling cascade under unchallenged conditions. Regulates the Imd pathway by specifically removing 'Lys-48'-linked ubiquitin from imd. Also promotes imd degradation probably by binding to imd and enhancing its association with the proteasome. This Drosophila melanogaster (Fruit fly) protein is Ubiquitin carboxyl-terminal hydrolase Usp2.